The chain runs to 685 residues: DNA ligase (685 aa).

NAD(+) contacts are provided by residues 47–51, 96–97, and Glu-125; these read DSEYD and SL. Catalysis depends on Lys-127, which acts as the N6-AMP-lysine intermediate. NAD(+) is bound by residues Arg-148, Glu-185, Lys-304, and Lys-328. The Zn(2+) site is built by Cys-422, Cys-425, Cys-440, and Cys-446. A BRCT domain is found at 605–685; that stretch reads ADAQPLKGQT…ALLALFAANR (81 aa).

It belongs to the NAD-dependent DNA ligase family. LigA subfamily. Mg(2+) serves as cofactor. It depends on Mn(2+) as a cofactor.

The catalysed reaction is NAD(+) + (deoxyribonucleotide)n-3'-hydroxyl + 5'-phospho-(deoxyribonucleotide)m = (deoxyribonucleotide)n+m + AMP + beta-nicotinamide D-nucleotide.. DNA ligase that catalyzes the formation of phosphodiester linkages between 5'-phosphoryl and 3'-hydroxyl groups in double-stranded DNA using NAD as a coenzyme and as the energy source for the reaction. It is essential for DNA replication and repair of damaged DNA. The sequence is that of DNA ligase from Shewanella putrefaciens (strain CN-32 / ATCC BAA-453).